Consider the following 425-residue polypeptide: Glucose-6-phosphate 1-dehydrogenase (425 aa).

Residues Arg-44 and Lys-135 each contribute to the NADP(+) site. Substrate contacts are provided by His-165, Lys-169, Glu-201, and Asp-220. Catalysis depends on His-225, which acts as the Proton acceptor. Lys-311 serves as a coordination point for substrate.

This sequence belongs to the glucose-6-phosphate dehydrogenase family.

The catalysed reaction is D-glucose 6-phosphate + NADP(+) = 6-phospho-D-glucono-1,5-lactone + NADPH + H(+). The protein operates within carbohydrate degradation; pentose phosphate pathway; D-ribulose 5-phosphate from D-glucose 6-phosphate (oxidative stage): step 1/3. Functionally, catalyzes the oxidation of glucose 6-phosphate to 6-phosphogluconolactone. This is Glucose-6-phosphate 1-dehydrogenase from Helicobacter pylori (strain ATCC 700392 / 26695) (Campylobacter pylori).